The chain runs to 297 residues: N-acetylneuraminate lyase (297 aa).

Aceneuramate-binding residues include Ser47 and Thr48. The Proton donor role is filled by Tyr137. Lys165 acts as the Schiff-base intermediate with substrate in catalysis. The aceneuramate site is built by Thr167, Gly189, Asp191, Glu192, and Ser208.

It belongs to the DapA family. NanA subfamily. In terms of assembly, homotetramer.

Its subcellular location is the cytoplasm. It carries out the reaction aceneuramate = aldehydo-N-acetyl-D-mannosamine + pyruvate. It functions in the pathway amino-sugar metabolism; N-acetylneuraminate degradation; D-fructose 6-phosphate from N-acetylneuraminate: step 1/5. Functionally, catalyzes the reversible aldol cleavage of N-acetylneuraminic acid (sialic acid; Neu5Ac) to form pyruvate and N-acetylmannosamine (ManNAc) via a Schiff base intermediate. This Shigella boydii serotype 4 (strain Sb227) protein is N-acetylneuraminate lyase.